We begin with the raw amino-acid sequence, 294 residues long: Nucleotide-binding protein Daud_0300 (294 aa).

Position 11–18 (11–18) interacts with ATP; the sequence is GLSGAGKT. 62-65 lines the GTP pocket; that stretch reads DIRG.

This sequence belongs to the RapZ-like family.

Its function is as follows. Displays ATPase and GTPase activities. This is Nucleotide-binding protein Daud_0300 from Desulforudis audaxviator (strain MP104C).